A 69-amino-acid chain; its full sequence is U2-agatoxin-Ao1e (69 aa).

An N-terminal signal peptide occupies residues 1–20 (MRAIISVLLISAMVFSIIEA). The propeptide occupies 21 to 34 (VPLEEGLQLFEAER). 3 disulfides stabilise this stretch: Cys37-Cys53, Cys44-Cys58, and Cys52-Cys68.

Belongs to the neurotoxin 01 (U2-agtx) family. Expressed by the venom gland.

It localises to the secreted. Insect active toxin causing rapid but reversible paralysis in crickets. No activity shown in mammals. Does not show effect on mammalian voltage-gated calcium channels. The polypeptide is U2-agatoxin-Ao1e (Agelena orientalis (Funnel-web spider)).